The following is a 411-amino-acid chain: ATPase GET3B (411 aa).

The N-terminal 67 residues, 1-67 (MATLSSYLLS…RRRNSLQVKS (67 aa)), are a transit peptide targeting the chloroplast. An ATP-binding site is contributed by 95 to 102 (KGGVGKTS). Residue Asp124 is part of the active site. An ATP-binding site is contributed by Asn348.

Belongs to the arsA ATPase family.

The protein localises to the plastid. It localises to the chloroplast stroma. It catalyses the reaction ATP + H2O = ADP + phosphate + H(+). This is ATPase GET3B from Arabidopsis thaliana (Mouse-ear cress).